We begin with the raw amino-acid sequence, 390 residues long: MKFVDEASILVVAGDGGNGCVSFRREKYIPKGGPDGGDGGDGGDVWMEADENLNTLIDYRFEKSFRAERGQNGASRDCTGKRGKDVTIKVPVGTRVIDQGTGETMGDMTKHGQRLLVAKGGWHGLGNTRFKSSVNRTPRQKTNGTPGDKRELLLELMLLADVGMLGMPNAGKSTFIRAVSAAKPKVADYPFTTLVPSLGVVRMDNEKSFVVADIPGLIEGAAEGAGLGIRFLKHLERCRVLLHLIDIDPIDGTDPVENARIIISELEKYSQDLAAKPRWLVFNKIDLLDKAEAEEKAKAIAEALGWEDKYYLISAASGLGVKDLCWDVMTFIIENPVVQAEEAKQPEKVEFMWDDYHRQQLEEIAEEDDEDWDDDWDEDDEEGVEFIYKR.

The Obg domain occupies 1–159 (MKFVDEASIL…RELLLELMLL (159 aa)). Residues 127–147 (NTRFKSSVNRTPRQKTNGTPG) are disordered. Over residues 129–145 (RFKSSVNRTPRQKTNGT) the composition is skewed to polar residues. Positions 160 to 333 (ADVGMLGMPN…LCWDVMTFII (174 aa)) constitute an OBG-type G domain. Residues 166–173 (GMPNAGKS), 191–195 (FTTLV), 213–216 (DIPG), 283–286 (NKID), and 314–316 (SAA) each bind GTP. Positions 173 and 193 each coordinate Mg(2+).

This sequence belongs to the TRAFAC class OBG-HflX-like GTPase superfamily. OBG GTPase family. Monomer. It depends on Mg(2+) as a cofactor.

Its subcellular location is the cytoplasm. Functionally, an essential GTPase which binds GTP, GDP and possibly (p)ppGpp with moderate affinity, with high nucleotide exchange rates and a fairly low GTP hydrolysis rate. Plays a role in control of the cell cycle, stress response, ribosome biogenesis and in those bacteria that undergo differentiation, in morphogenesis control. In Escherichia fergusonii (strain ATCC 35469 / DSM 13698 / CCUG 18766 / IAM 14443 / JCM 21226 / LMG 7866 / NBRC 102419 / NCTC 12128 / CDC 0568-73), this protein is GTPase Obg.